We begin with the raw amino-acid sequence, 310 residues long: N-acetyl-gamma-glutamyl-phosphate reductase (310 aa).

Cys117 is an active-site residue.

This sequence belongs to the NAGSA dehydrogenase family. Type 2 subfamily.

It localises to the cytoplasm. The enzyme catalyses N-acetyl-L-glutamate 5-semialdehyde + phosphate + NADP(+) = N-acetyl-L-glutamyl 5-phosphate + NADPH + H(+). The protein operates within amino-acid biosynthesis; L-arginine biosynthesis; N(2)-acetyl-L-ornithine from L-glutamate: step 3/4. Functionally, catalyzes the NADPH-dependent reduction of N-acetyl-5-glutamyl phosphate to yield N-acetyl-L-glutamate 5-semialdehyde. This chain is N-acetyl-gamma-glutamyl-phosphate reductase, found in Sinorhizobium medicae (strain WSM419) (Ensifer medicae).